Reading from the N-terminus, the 218-residue chain is Dehydration-responsive element-binding protein 1B (218 aa).

Residues 1–26 are disordered; sequence MEVEEAAYRTVWSEPPKRPAGRTKFR. Residues 32-95 constitute a DNA-binding region (AP2/ERF); the sequence is VYRGVRRRGG…RGRAACLNFA (64 aa). The segment at 131–151 is disordered; the sequence is SAAPSSPAETFANDGDEEEDN.

The protein belongs to the AP2/ERF transcription factor family. ERF subfamily.

The protein resides in the nucleus. Functionally, transcriptional activator that binds specifically to the DNA sequence 5'-[AG]CCGAC-3'. Binding to the C-repeat/DRE element mediates high salinity- and dehydration-inducible transcription. Confers resistance to high salt, cold and drought stress. This Oryza sativa subsp. japonica (Rice) protein is Dehydration-responsive element-binding protein 1B (DREB1B).